The following is a 417-amino-acid chain: Serine hydroxymethyltransferase (417 aa).

Residues Leu-121 and Gly-125–Leu-127 contribute to the (6S)-5,6,7,8-tetrahydrofolate site. The residue at position 229 (Lys-229) is an N6-(pyridoxal phosphate)lysine. Ser-355–Phe-357 contacts (6S)-5,6,7,8-tetrahydrofolate.

This sequence belongs to the SHMT family. Homodimer. Pyridoxal 5'-phosphate is required as a cofactor.

It is found in the cytoplasm. The enzyme catalyses (6R)-5,10-methylene-5,6,7,8-tetrahydrofolate + glycine + H2O = (6S)-5,6,7,8-tetrahydrofolate + L-serine. It functions in the pathway one-carbon metabolism; tetrahydrofolate interconversion. The protein operates within amino-acid biosynthesis; glycine biosynthesis; glycine from L-serine: step 1/1. Its function is as follows. Catalyzes the reversible interconversion of serine and glycine with tetrahydrofolate (THF) serving as the one-carbon carrier. This reaction serves as the major source of one-carbon groups required for the biosynthesis of purines, thymidylate, methionine, and other important biomolecules. Also exhibits THF-independent aldolase activity toward beta-hydroxyamino acids, producing glycine and aldehydes, via a retro-aldol mechanism. This chain is Serine hydroxymethyltransferase, found in Shewanella oneidensis (strain ATCC 700550 / JCM 31522 / CIP 106686 / LMG 19005 / NCIMB 14063 / MR-1).